A 155-amino-acid polypeptide reads, in one-letter code: Regulatory protein RecX (155 aa).

It belongs to the RecX family.

The protein resides in the cytoplasm. Its function is as follows. Modulates RecA activity. The protein is Regulatory protein RecX of Vibrio parahaemolyticus serotype O3:K6 (strain RIMD 2210633).